The following is a 968-amino-acid chain: RNA polymerase-associated protein RapA (968 aa).

The Helicase ATP-binding domain occupies 163–332; the sequence is EVGRRFAPRV…FARLRLLDPD (170 aa). 176 to 183 lines the ATP pocket; the sequence is DEVGLGKT. Residues 278–281 carry the DEAH box motif; sequence DEAH. In terms of domain architecture, Helicase C-terminal spans 491–641; sequence RVDWLINFLK…AFEQTCPSGH (151 aa).

This sequence belongs to the SNF2/RAD54 helicase family. RapA subfamily. In terms of assembly, interacts with the RNAP. Has a higher affinity for the core RNAP than for the holoenzyme. Its ATPase activity is stimulated by binding to RNAP.

Transcription regulator that activates transcription by stimulating RNA polymerase (RNAP) recycling in case of stress conditions such as supercoiled DNA or high salt concentrations. Probably acts by releasing the RNAP, when it is trapped or immobilized on tightly supercoiled DNA. Does not activate transcription on linear DNA. Probably not involved in DNA repair. This is RNA polymerase-associated protein RapA from Shewanella sediminis (strain HAW-EB3).